The primary structure comprises 117 residues: MTRIKRGYIARRRRKKISLFASSFRGAHSRLTRTITQQRIRALVSAHRDRDRKKRDFRRLWITRINAVIRGVGVSYSYSRLIHNLYKKQLLLNRKILAQIAISNRNCLYMISNEIRK.

It belongs to the bacterial ribosomal protein bL20 family.

It localises to the plastid. Its subcellular location is the chloroplast. In terms of biological role, binds directly to 23S ribosomal RNA and is necessary for the in vitro assembly process of the 50S ribosomal subunit. It is not involved in the protein synthesizing functions of that subunit. This is Large ribosomal subunit protein bL20c from Gossypium hirsutum (Upland cotton).